The primary structure comprises 410 residues: Serine hydroxymethyltransferase (410 aa).

(6S)-5,6,7,8-tetrahydrofolate is bound by residues leucine 119 and 123–125; that span reads GHL. Position 228 is an N6-(pyridoxal phosphate)lysine (lysine 228). 351 to 353 is a (6S)-5,6,7,8-tetrahydrofolate binding site; the sequence is SPF.

This sequence belongs to the SHMT family. As to quaternary structure, homodimer. It depends on pyridoxal 5'-phosphate as a cofactor.

The protein localises to the cytoplasm. The catalysed reaction is (6R)-5,10-methylene-5,6,7,8-tetrahydrofolate + glycine + H2O = (6S)-5,6,7,8-tetrahydrofolate + L-serine. It functions in the pathway one-carbon metabolism; tetrahydrofolate interconversion. Its pathway is amino-acid biosynthesis; glycine biosynthesis; glycine from L-serine: step 1/1. Its function is as follows. Catalyzes the reversible interconversion of serine and glycine with tetrahydrofolate (THF) serving as the one-carbon carrier. This reaction serves as the major source of one-carbon groups required for the biosynthesis of purines, thymidylate, methionine, and other important biomolecules. Also exhibits THF-independent aldolase activity toward beta-hydroxyamino acids, producing glycine and aldehydes, via a retro-aldol mechanism. The sequence is that of Serine hydroxymethyltransferase from Clostridium perfringens (strain 13 / Type A).